A 302-amino-acid polypeptide reads, in one-letter code: MEAIPVLAGPTGSGKTFLALRLGEEVPVEVVSADATMVYRGLDIGTDKPTPEERARVPHHLVDVLEPHEAMSVARFLALAEEAIAHVLSRGKLPLVVGGTGYYIRALSEGLHDLPPPDPGVQEALWAELEARGLEALLAELARASPEDARRVGKNPRRLVRALEVLRRTGTPPARFPKRPPRFRYKKLVLWPDRAWLFPRLEERAKAQFARGLVEEVRGLLERYPRMPTALQAIGYKEVAGHLLGAYGLEEALERDIRAVKAYAKRQYTWFRHEPGDVVYLPRGGEEAYVGFRDWLRLHFGL.

Residue 9-16 coordinates ATP; it reads GPTGSGKT. 11-16 provides a ligand contact to substrate; it reads TGSGKT.

The protein belongs to the IPP transferase family. In terms of assembly, monomer. The cofactor is Mg(2+).

The enzyme catalyses adenosine(37) in tRNA + dimethylallyl diphosphate = N(6)-dimethylallyladenosine(37) in tRNA + diphosphate. Its function is as follows. Catalyzes the transfer of a dimethylallyl group onto the adenine at position 37 in tRNAs that read codons beginning with uridine, leading to the formation of N6-(dimethylallyl)adenosine (i(6)A). This Thermus thermophilus (strain ATCC BAA-163 / DSM 7039 / HB27) protein is tRNA dimethylallyltransferase.